The chain runs to 232 residues: 2,3,4,5-tetrahydropyridine-2,6-dicarboxylate N-acetyltransferase (232 aa).

It belongs to the transferase hexapeptide repeat family. DapH subfamily.

The catalysed reaction is (S)-2,3,4,5-tetrahydrodipicolinate + acetyl-CoA + H2O = L-2-acetamido-6-oxoheptanedioate + CoA. Its pathway is amino-acid biosynthesis; L-lysine biosynthesis via DAP pathway; LL-2,6-diaminopimelate from (S)-tetrahydrodipicolinate (acetylase route): step 1/3. Catalyzes the transfer of an acetyl group from acetyl-CoA to tetrahydrodipicolinate. This Streptococcus uberis (strain ATCC BAA-854 / 0140J) protein is 2,3,4,5-tetrahydropyridine-2,6-dicarboxylate N-acetyltransferase.